Here is a 568-residue protein sequence, read N- to C-terminus: U6 small nuclear RNA (adenine-(43)-N(6))-methyltransferase (568 aa).

The interval 1 to 20 is disordered; it reads MSEIDTNDIKKEMDNKNYRD. The segment covering 7–20 has biased composition (basic and acidic residues); it reads NDIKKEMDNKNYRD. Positions 117, 151, 175, and 250 each coordinate S-adenosyl-L-methionine. Disordered stretches follow at residues 363–383, 403–431, and 503–538; these read KENN…INNN, NLDS…NNNN, and DPKI…NKNN. Low complexity-rich tracts occupy residues 365-383, 409-431, and 507-538; these read NNNI…INNN, NNNN…NNNN, and NNNN…NKNN.

It belongs to the methyltransferase superfamily. METTL16/RlmF family.

It carries out the reaction adenosine in U6 snRNA + S-adenosyl-L-methionine = N(6)-methyladenosine in U6 snRNA + S-adenosyl-L-homocysteine + H(+). RNA N6-methyltransferase that mediates N6-methylation of adenine of U6 small nuclear RNA (U6 snRNA). The sequence is that of U6 small nuclear RNA (adenine-(43)-N(6))-methyltransferase from Dictyostelium discoideum (Social amoeba).